The sequence spans 140 residues: ATP synthase epsilon chain (140 aa).

This sequence belongs to the ATPase epsilon chain family. As to quaternary structure, F-type ATPases have 2 components, CF(1) - the catalytic core - and CF(0) - the membrane proton channel. CF(1) has five subunits: alpha(3), beta(3), gamma(1), delta(1), epsilon(1). CF(0) has three main subunits: a, b and c.

It is found in the cell inner membrane. In terms of biological role, produces ATP from ADP in the presence of a proton gradient across the membrane. The protein is ATP synthase epsilon chain of Pseudoalteromonas translucida (strain TAC 125).